Reading from the N-terminus, the 104-residue chain is Thioredoxin-2 (104 aa).

Residues 2–104 (VTQLKSASEY…AIKQAIASNV (103 aa)) form the Thioredoxin domain. Catalysis depends on nucleophile residues C31 and C34. A disulfide bridge links C31 with C34. At S62 the chain carries Phosphoserine. Residues K67 and K97 each participate in a glycyl lysine isopeptide (Lys-Gly) (interchain with G-Cter in ubiquitin) cross-link.

This sequence belongs to the thioredoxin family. As to quaternary structure, monomer. Part of the heterodimeric LMA1 complex together with the proteinase inhibitor PBI2. LMA1 binds to the ATPase SEC18. In terms of processing, reversible disulfide bond formation between Cys-31 and Cys-34, reverted by thioredoxin reductase TRR1 using NADPH as hydrogen donor.

It localises to the cytoplasm. The protein resides in the golgi apparatus membrane. It is found in the nucleus. Participates as a hydrogen donor in redox reactions through the reversible oxidation of its active center dithiol to a disulfide, accompanied by the transfer of 2 electrons and 2 protons. It is involved in many cellular processes, including deoxyribonucleotide synthesis, repair of oxidatively damaged proteins, protein folding, sulfur metabolism, and redox homeostasis. Thioredoxin-dependent enzymes include phosphoadenosine-phosphosulfate reductase MET16, alkyl-hydroperoxide reductase DOT5, thioredoxin peroxidases TSA1 and TSA2, alkyl hydroperoxide reductase AHP1, and peroxiredoxin HYR1. Thioredoxin is also involved in protection against reducing stress. As part of the LMA1 complex, it is involved in the facilitation of vesicle fusion such as homotypic vacuole and ER-derived COPII vesicle fusion with the Golgi. This activity does not require the redox mechanism. Through its capacity to inactivate the stress response transcription factor YAP1 and its regulator the hydroperoxide stress sensor HYR1, it is involved in feedback regulation of stress response gene expression upon oxidative stress. In Saccharomyces cerevisiae (strain ATCC 204508 / S288c) (Baker's yeast), this protein is Thioredoxin-2 (TRX2).